The chain runs to 306 residues: MIFQRTVQKMVQTTGVGLHSGNKVTLRIMPAPVNSGIVLTRTDLSPAVSIPAKAELVRETTMCTALVNDAGIRISTIEHLFAALAGLGIDNAVIEVDAPEIPIMDGSASPFVFLLQSAGIKEQAAAKKYIKINKTIRVEDGDKWAELKPFKGFRVNFKIDFNHPEIARSQQHMVMDFSTSAFVKDISRARTFGFMRDIEYLRANNLALGGSMENAVVLDEYRVLNPDGLRYEDEFVKHKILDAFGDLYVAGHAIVGEFCAFKTGHALNNQLVRALLVQQDAWELVSFDKEADVPVSFMVPGTQAFA.

Residues His79, His238, and Asp242 each coordinate Zn(2+). His265 acts as the Proton donor in catalysis.

It belongs to the LpxC family. Zn(2+) is required as a cofactor.

The enzyme catalyses a UDP-3-O-[(3R)-3-hydroxyacyl]-N-acetyl-alpha-D-glucosamine + H2O = a UDP-3-O-[(3R)-3-hydroxyacyl]-alpha-D-glucosamine + acetate. It functions in the pathway glycolipid biosynthesis; lipid IV(A) biosynthesis; lipid IV(A) from (3R)-3-hydroxytetradecanoyl-[acyl-carrier-protein] and UDP-N-acetyl-alpha-D-glucosamine: step 2/6. In terms of biological role, catalyzes the hydrolysis of UDP-3-O-myristoyl-N-acetylglucosamine to form UDP-3-O-myristoylglucosamine and acetate, the committed step in lipid A biosynthesis. This is UDP-3-O-acyl-N-acetylglucosamine deacetylase from Shewanella denitrificans (strain OS217 / ATCC BAA-1090 / DSM 15013).